The sequence spans 183 residues: uncharacterized protein (183 aa).

A Glycyl lysine isopeptide (Lys-Gly) (interchain with G-Cter in ubiquitin) cross-link involves residue Lys21. 2 disordered regions span residues Asn24–Asn111 and Pro160–Pro183. The segment covering Gln99–Gln108 has biased composition (low complexity). The segment covering Leu170–Pro183 has biased composition (polar residues).

It is found in the cytoplasm. This is an uncharacterized protein from Saccharomyces cerevisiae (strain ATCC 204508 / S288c) (Baker's yeast).